Reading from the N-terminus, the 264-residue chain is Pyridoxine 5'-phosphate synthase (264 aa).

Over residues 1 to 21 (MTDTAQILPTTLEQNPQNTSK) the composition is skewed to polar residues. The interval 1-22 (MTDTAQILPTTLEQNPQNTSKK) is disordered. Residue asparagine 28 participates in 3-amino-2-oxopropyl phosphate binding. 30-31 (DH) contributes to the 1-deoxy-D-xylulose 5-phosphate binding site. Arginine 39 provides a ligand contact to 3-amino-2-oxopropyl phosphate. The active-site Proton acceptor is the histidine 64. 2 residues coordinate 1-deoxy-D-xylulose 5-phosphate: arginine 66 and histidine 71. The Proton acceptor role is filled by glutamate 91. A 1-deoxy-D-xylulose 5-phosphate-binding site is contributed by threonine 121. The Proton donor role is filled by histidine 217. 3-amino-2-oxopropyl phosphate-binding positions include glycine 218 and 239–240 (GH).

The protein belongs to the PNP synthase family. Homooctamer; tetramer of dimers.

Its subcellular location is the cytoplasm. The enzyme catalyses 3-amino-2-oxopropyl phosphate + 1-deoxy-D-xylulose 5-phosphate = pyridoxine 5'-phosphate + phosphate + 2 H2O + H(+). The protein operates within cofactor biosynthesis; pyridoxine 5'-phosphate biosynthesis; pyridoxine 5'-phosphate from D-erythrose 4-phosphate: step 5/5. In terms of biological role, catalyzes the complicated ring closure reaction between the two acyclic compounds 1-deoxy-D-xylulose-5-phosphate (DXP) and 3-amino-2-oxopropyl phosphate (1-amino-acetone-3-phosphate or AAP) to form pyridoxine 5'-phosphate (PNP) and inorganic phosphate. The sequence is that of Pyridoxine 5'-phosphate synthase from Psychrobacter cryohalolentis (strain ATCC BAA-1226 / DSM 17306 / VKM B-2378 / K5).